Reading from the N-terminus, the 1121-residue chain is Anillin (1121 aa).

Residue Met1 is modified to N-acetylmethionine. A compositionally biased stretch (basic and acidic residues) spans 1–25 (MDPFTEKLLERTRARRENLQRKMAE). The interval 1-45 (MDPFTEKLLERTRARRENLQRKMAERPTAVARSAPHAKRGREPLS) is required for ubiquitination. Disordered regions lie at residues 1 to 113 (MDPF…AAIS), 125 to 196 (ADRG…PVGR), and 212 to 402 (DDVS…TKAI). The interaction with CD2AP stretch occupies residues 1–154 (MDPFTEKLLE…MQRLAEQRRH (154 aa)). Positions 1 to 228 (MDPFTEKLLE…AKQNSVQEQP (228 aa)) are nuclear localization. Ser73 and Ser96 each carry phosphoserine. A compositionally biased stretch (pro residues) spans 96–109 (SPMPAPRQAKPPAP). Polar residues predominate over residues 130 to 143 (NSGSEASATSSVKT). Over residues 147–157 (RLAEQRRHWDS) the composition is skewed to basic and acidic residues. Ser180 is subject to Phosphoserine. Thr192 carries the phosphothreonine modification. Positions 216-228 (HSSAKQNSVQEQP) are enriched in polar residues. Ser223, Ser250, and Ser259 each carry phosphoserine. Residues 229–671 (GTACLSKSSS…RDLLYSIDAY (443 aa)) are interaction with F-actin. The span at 234 to 250 (SKSSSASGASASINSSS) shows a compositional bias: low complexity. A compositionally biased stretch (low complexity) spans 282-298 (SASVSSSVKASSPVTAA). Residues 303-314 (ENREAQNPELLH) show a composition bias toward basic and acidic residues. Thr316 carries the phosphothreonine modification. Phosphoserine occurs at positions 318 and 334. Phosphothreonine is present on Thr359. Lys366 carries the N6-acetyllysine modification. Positions 368-384 (FLERFGERCQEHSKESP) are enriched in basic and acidic residues. Positions 391–401 (KTPNITPNTKA) are enriched in polar residues. Residues Thr392 and Thr396 each carry the phosphothreonine modification. 2 positions are modified to phosphoserine: Ser414 and Ser444. The tract at residues 490–511 (NEPAVKLSSTEPAGSTESEMTK) is disordered. Residues 496–511 (LSSTEPAGSTESEMTK) are compositionally biased toward polar residues. Ser513, Ser548, and Ser556 each carry phosphoserine. Residues 564-599 (FSDVLEEGELDVEKSQEEMDQVGAENSEEQEDALNI) are a coiled coil. Residues 623 to 635 (SPPSELRDSNLSA) are compositionally biased toward polar residues. Residues 623–656 (SPPSELRDSNLSAASPKPGKFQRTRVPRAESADS) are disordered. Phosphoserine occurs at positions 637, 653, 656, and 659. Tyr666 is modified (phosphotyrosine). Residues Ser673, Ser683, Ser787, and Ser924 each carry the phosphoserine modification. A localization to the cleavage furrow region spans residues 725–1121 (QQTVIYQASQ…DACYKPVGKP (397 aa)). A PH domain is found at 980–1104 (AVEEKGFLTI…WMQKLNQVIV (125 aa)).

Interacts with F-actin. Interacts with CD2AP. May interact with RHOA. Interacts with FZR1/CDH1 during mitotic exit. In terms of processing, phosphorylated during mitosis. Post-translationally, ubiquitinated, and this requires FZR1/CDH1.

It is found in the nucleus. It localises to the cytoplasm. Its subcellular location is the cytoskeleton. The protein localises to the cell cortex. The protein resides in the cell projection. It is found in the bleb. In terms of biological role, required for cytokinesis. Essential for the structural integrity of the cleavage furrow and for completion of cleavage furrow ingression. Plays a role in bleb assembly during metaphase and anaphase of mitosis. May play a significant role in podocyte cell migration. The sequence is that of Anillin (Anln) from Mus musculus (Mouse).